We begin with the raw amino-acid sequence, 1365 residues long: ATP-dependent RNA helicase DHX29 (1365 aa).

Basic residues predominate over residues 1–10 (MGGKNKKHKA). 3 disordered regions span residues 1–74 (MGGK…NDSG), 174–222 (SQEF…EETT), and 235–257 (AEQQ…EKFD). 2 stretches are compositionally biased toward low complexity: residues 11 to 36 (PGAA…VGEA) and 43 to 53 (ARPAPAVPTGA). A phosphoserine mark is found at Ser69, Ser190, and Ser198. The segment covering 187-203 (KFQSVQIQATLSPPQQT) has biased composition (polar residues). The span at 206-222 (KRQEEDPKIKPKKEETT) shows a compositional bias: basic and acidic residues. A coiled-coil region spans residues 281 to 308 (LEKNKQGQKEAQEKIRKFQREMETLEDH). The interval 500 to 524 (QQQQQQQQRPESEKGGSEDPEESWE) is disordered. The Helicase ATP-binding domain occupies 581-754 (VETLKRHRVV…FTHCPILRIS (174 aa)). Residue 594–601 (GETGSGKS) coordinates ATP. A DEAH box motif is present at residues 701–704 (DEVH). The 178-residue stretch at 848–1025 (LILELLVYLD…ELCLHIMKCD (178 aa)) folds into the Helicase C-terminal domain.

It belongs to the DEAD box helicase family. DEAH subfamily. Part of the 43S pre-initiation complex (PIC) that contains at least Met-tRNA, EIF1, EIF1A (EIF1AX or EIF1AY), EIF2S1, EIF2S2, EIF2S3, EIF3A, EIF3B, EIF3C, EIF3D, EIF3E, EIF3F, EIF3G, EIF3H, EIF3I, EIF3J, EIF3K, EIF3L, EIF3M, DHX29 and the 40S ribosomal subunit.

The protein localises to the cytoplasm. The enzyme catalyses ATP + H2O = ADP + phosphate + H(+). Functionally, ATP-binding RNA helicase involved in translation initiation. Part of the 43S pre-initiation complex that is required for efficient initiation on mRNAs of higher eukaryotes with structured 5'-UTRs by promoting efficient NTPase-dependent 48S complex formation. Specifically binds to the 40S ribosome near the mRNA entrance. Does not possess a processive helicase activity. This chain is ATP-dependent RNA helicase DHX29, found in Mus musculus (Mouse).